The primary structure comprises 1054 residues: MGTAQVLPGILQKHCCILPDRNTESQCTLCGEPEEEEAGDLVQPGISFPGPAEEDLDPQYSWSPTQHFNEERYSPAPRSMKGLSGSRTQPPLCSGHTCGLAPPEDCEHLHHGPDARPPYLLSPADSCPGGRHRCSPRSSVHSECVMMPVVLGDHVSSSTFPRMHYSSHYDTRDDCAVAHAGAKINRIPANLLDQFEKQLPLHRDGFHTLQYQRTSAAAEQRSESPGRIRHLVHSVQKLFTKSHSLEGSSKSNANGTKADGRADDHHHAHHAKHSKRSKSKERKPEGKPRPGMSSWWSSDDNLDSDSTYRTPSVLNRHHLGPVAHCYPDALQSPFGDLSLKTSKSNNDVKCSACEGLALTPDAKYLKRSSWSTLTVSQAKEAYRKSSLNLDKPLLHQDAKPALRPCHYLQVPQDEWGGYPTGGKDEEIPCRRMRSGSYIKAMGDEESGESDSSPKTSPKSAILPEPLLKSIGQRPLGEHQTQTYLQAASDVPVGHSLDPAANYNSPKFRSRNQSYMRAVSTLSQASCVSQVSEAEINGQFESVCESVFSEVESQAMDALDLPGCFRTRSHSYLRAIQAGYSQDDECIPMMTPSDITSTIRSTAAVSYTNYKKTPPPVPPRTTSKPLISVTAQSSTESTQDAYQDSRAQRMSPWPQDSRGLYNSTDSLDSNKAMNLALETAAAQRHLPESQSSSVRTSDKAILVSKAEELLKSRCSSIGIQDSEFPEHQPYPRSDVETATDSDTESRGLREYHSVGVQVEDEKRHGRFKRSNSVTAAVQADLELEGFPGHITTEDKGLQFGSSFQRHSEPSTPTQYSAVRTVRTQGLFSYREDYRTQVDTSTLPPPDPWLEPAIDTVETGRMSPCRRDGSWFLKLLHAETKRMEGWCKEMEREAEENDLSEEILGKIRSAVGSAQLLMSQKFQQFYWLCQQNMDPSAMPRPTSQDLAGYWDMLQLSIEDVSMKFDELQRLRLNDWKMMESPERKEERKVPPPIPKKPPKGKFPITREKSLDLPDRQRQEARRRLMAAKRAASFRQNSASERADSIEIYIPEAQTRL.

Disordered stretches follow at residues Glu-32–Arg-87 and Ser-242–Asn-301. Residues Ser-242–Gly-255 are compositionally biased toward polar residues. Basic residues predominate over residues His-267 to Glu-281. Residues Arg-289–Asp-299 are compositionally biased toward low complexity. Phosphoserine occurs at positions 298, 304, 386, and 452. Disordered stretches follow at residues Gly-442–Glu-464 and Tyr-609–Leu-666. Residues Val-628 to Tyr-641 show a composition bias toward polar residues. A phosphoserine mark is found at Ser-662, Ser-665, Ser-668, and Ser-715. Residues Gln-719 to Gly-746 are disordered. At Thr-738 the chain carries Phosphothreonine. A phosphoserine mark is found at Ser-740, Ser-771, Ser-806, Ser-978, and Ser-1007. Basic and acidic residues-rich tracts occupy residues Glu-977 to Val-987 and Ile-1002 to Arg-1020. The interval Glu-977 to Arg-1021 is disordered.

This sequence belongs to the SAPAP family. In terms of assembly, interacts with DLG1 and DLG4/PSD-95. In terms of tissue distribution, expressed in brain and kidney.

The protein localises to the cell membrane. Its subcellular location is the postsynaptic density. It localises to the synapse. Its function is as follows. May play a role in the molecular organization of synapses and neuronal cell signaling. Could be an adapter protein linking ion channel to the subsynaptic cytoskeleton. May induce enrichment of PSD-95/SAP90 at the plasma membrane. The chain is Disks large-associated protein 2 from Homo sapiens (Human).